Reading from the N-terminus, the 68-residue chain is Guanine nucleotide-binding protein G(I)/G(S)/G(O) subunit gamma-5B (68 aa).

In terms of domain architecture, G protein gamma spans 3–68 (GFSSVAATKK…FRPQKVCSFL (66 aa)). The residue at position 65 (cysteine 65) is a Cysteine methyl ester. Cysteine 65 carries S-geranylgeranyl cysteine lipidation. The propeptide at 66-68 (SFL) is removed in mature form.

This sequence belongs to the G protein gamma family. G proteins are composed of 3 units; alpha, beta and gamma.

The protein resides in the cell membrane. Guanine nucleotide-binding proteins (G proteins) are involved as a modulator or transducer in various transmembrane signaling systems. The beta and gamma chains are required for the GTPase activity, for replacement of GDP by GTP, and for G protein-effector interaction. This chain is Guanine nucleotide-binding protein G(I)/G(S)/G(O) subunit gamma-5B, found in Homo sapiens (Human).